A 917-amino-acid chain; its full sequence is Auxin response factor 17 (917 aa).

The segment at residues 134-236 is a DNA-binding region (TF-B3); the sequence is FCKTLTASDT…QLLLGIRRAN (103 aa). The disordered stretch occupies residues 571 to 649; the sequence is SVPNALSPFS…RPTAVPVPDP (79 aa). Composition is skewed to low complexity over residues 576–594 and 604–620; these read LSPF…MTLQ and SYPD…NTST. Residues 786–870 enclose the PB1 domain; sequence ATFVKVYKSG…SCIKILSPQE (85 aa).

Belongs to the ARF family. In terms of assembly, homodimers and heterodimers.

Its subcellular location is the nucleus. In terms of biological role, auxin response factors (ARFs) are transcriptional factors that bind specifically to the DNA sequence 5'-TGTCTC-3' found in the auxin-responsive promoter elements (AuxREs). The sequence is that of Auxin response factor 17 (ARF17) from Oryza sativa subsp. indica (Rice).